Reading from the N-terminus, the 231-residue chain is 7-cyano-7-deazaguanine synthase (231 aa).

8–18 (FSGGQDSTTCL) serves as a coordination point for ATP. Cys188, Cys197, Cys200, and Cys203 together coordinate Zn(2+).

Belongs to the QueC family. Zn(2+) serves as cofactor.

It carries out the reaction 7-carboxy-7-deazaguanine + NH4(+) + ATP = 7-cyano-7-deazaguanine + ADP + phosphate + H2O + H(+). It participates in purine metabolism; 7-cyano-7-deazaguanine biosynthesis. Functionally, catalyzes the ATP-dependent conversion of 7-carboxy-7-deazaguanine (CDG) to 7-cyano-7-deazaguanine (preQ(0)). The protein is 7-cyano-7-deazaguanine synthase of Salmonella choleraesuis (strain SC-B67).